A 511-amino-acid chain; its full sequence is BAR/IMD domain-containing adapter protein 2-like 1 (511 aa).

One can recognise an IMD domain in the interval 1 to 249 (MSRGPEEVNR…MNMIEEIKTP (249 aa)). Positions 115-154 (MNATLKRYQTEHKNKLESLEKSQAELKKIRRKSQGSRNAL) form a coiled coil. Phosphothreonine occurs at positions 248 and 257. Phosphoserine is present on residues Ser261 and Ser281. The segment at 302-328 (NNPATAAPNSQRVNNSTGTSEDPSLQR) is disordered. A compositionally biased stretch (polar residues) spans 303 to 328 (NPATAAPNSQRVNNSTGTSEDPSLQR). Residues Ser331 and Ser354 each carry the phosphoserine modification. The 64-residue stretch at 339 to 402 (MKKQKVKTIF…PSSYTKLLEE (64 aa)) folds into the SH3 domain. Phosphothreonine is present on Thr412. Phosphoserine occurs at positions 414, 420, and 422. Residues 451 to 511 (RRADSARTTS…TNDRSAPIIR (61 aa)) form a disordered region. Residues 483-511 (PPFLSGENPFATVKLRPTVTNDRSAPIIR) form a binds F-actin region.

As to quaternary structure, interacts with RAC1. Binds to F-actin. Interacts with FASLG. Interacts (via SH3 domain) with E.coli effector protein EspF(U) (via PXXP motifs). Identified in a complex containing at least WASL, BAIAP2L1 and E.coli EspF(U). Interacts with E.coli intimin receptor Tir. Post-translationally, phosphorylated on tyrosine in response to insulin.

It localises to the cytoplasm. It is found in the cytoskeleton. Its function is as follows. May function as adapter protein. Involved in the formation of clusters of actin bundles. Plays a role in the reorganization of the actin cytoskeleton in response to bacterial infection. This is BAR/IMD domain-containing adapter protein 2-like 1 (BAIAP2L1) from Homo sapiens (Human).